Reading from the N-terminus, the 420-residue chain is Probable 3-isopropylmalate dehydratase large subunit (420 aa).

Positions 301, 361, and 364 each coordinate [4Fe-4S] cluster.

Belongs to the aconitase/IPM isomerase family. LeuC type 2 subfamily. In terms of assembly, heterodimer of LeuC and LeuD. The cofactor is [4Fe-4S] cluster.

It catalyses the reaction (2R,3S)-3-isopropylmalate = (2S)-2-isopropylmalate. The protein operates within amino-acid biosynthesis; L-leucine biosynthesis; L-leucine from 3-methyl-2-oxobutanoate: step 2/4. Catalyzes the isomerization between 2-isopropylmalate and 3-isopropylmalate, via the formation of 2-isopropylmaleate. This Methanosarcina mazei (strain ATCC BAA-159 / DSM 3647 / Goe1 / Go1 / JCM 11833 / OCM 88) (Methanosarcina frisia) protein is Probable 3-isopropylmalate dehydratase large subunit.